The following is a 319-amino-acid chain: MDEMKVIEIIKKTLKFSNENIVKGIDDDCAIIKIDENFYLVATTDMMVKKAHIPSILSPYEIGGRILTANVSDIASMGAKPLAFLVSISLSKEEANEKFIKELYSGLDDFSKLYDCPVVGGDTNRGDELILSGTAFGITDNPIYRRGKVGDDICVTNDLGRVYCALTLYYMLKENKISYKEFERLCQKYPKIIEKLRKPIARIKEGLLMNKLINGCCDISDGLGKEITYFKNFEIYSDRIFKLIPEDVIEFCDAFNLNPIKVALNSGEEFELLFTTSKFNKVKDSLKGYSKIYKIGKIIEDGQFIDGEEFYGGGYIHKW.

Residues aspartate 28, threonine 43, threonine 44, and aspartate 45 each contribute to the Mg(2+) site. Residue histidine 52 participates in substrate binding. Aspartate 73 is a binding site for Mg(2+). ATP contacts are provided by residues tyrosine 104, 121-122 (GD), and arginine 145. Position 122 (aspartate 122) interacts with Mg(2+). Aspartate 218 is a Mg(2+) binding site. Serine 220 provides a ligand contact to ATP. Aspartate 221 lines the Mg(2+) pocket. Residues glutamate 268 and tyrosine 315 each coordinate substrate.

The protein belongs to the thiamine-monophosphate kinase family.

It carries out the reaction thiamine phosphate + ATP = thiamine diphosphate + ADP. The protein operates within cofactor biosynthesis; thiamine diphosphate biosynthesis; thiamine diphosphate from thiamine phosphate: step 1/1. Its function is as follows. Catalyzes the ATP-dependent phosphorylation of thiamine-monophosphate (TMP) to form thiamine-pyrophosphate (TPP), the active form of vitamin B1. The sequence is that of Thiamine-monophosphate kinase from Methanocaldococcus jannaschii (strain ATCC 43067 / DSM 2661 / JAL-1 / JCM 10045 / NBRC 100440) (Methanococcus jannaschii).